Consider the following 522-residue polypeptide: Cytochrome P450 monooxygenase sirB (522 aa).

Residues 22 to 42 (ASAILFCTLLTVFLFISQGTV) form a helical membrane-spanning segment. N-linked (GlcNAc...) asparagine glycosylation occurs at N191. A helical membrane pass occupies residues 304–324 (VLHLSFAATGTVAILITHMIY). Residue C462 participates in heme binding.

This sequence belongs to the cytochrome P450 family. Heme serves as cofactor.

It is found in the membrane. Its pathway is mycotoxin biosynthesis. Cytochrome P450 monooxygenase; part of the gene cluster that mediates the biosynthesis of sirodesmin PL, an epipolythiodioxopiperazine (ETP) characterized by a disulfide bridged cyclic dipeptide and that acts as a phytotoxin which is involved in the blackleg didease of canola. SirD catalyzes the O-prenylation of L-tyrosine (L-Tyr) in the presence of dimethylallyl diphosphate (DMAPP) to yield 4-O-dimethylallyl-L-Tyr, and therefore represents probably the first pathway-specific enzyme in the biosynthesis of sirodesmin PL. 4-O-dimethylallyl-L-Tyr, then undergoes condensation with L-Ser in a reaction catalyzed by the non-ribosomal peptide synthase sirP to form the diketopiperazine (DKP) backbone. Further bishydroxylation of the DKP performed by the cytochrome P450 monooxygenase sirC leads to the production of the intermediate phomamide. This step is essential to form the reactive thiol group required for toxicity of sirodesmin PL. The next steps of sirodesmin biosynthesis are not well understood yet, but some predictions could be made from intermediate compounds identification. Phomamide is converted into phomalizarine via oxidation, probably by sirT. Further oxidation, methylation (by sirM or sirN) and reduction steps convert phomalizarine to deacetyl sirodesmin. Finally, acetyltransferase sirH probably acetylates deacetyl sirodesmin to produce sirodesmin PL. The protein is Cytochrome P450 monooxygenase sirB of Leptosphaeria maculans (Blackleg fungus).